Here is a 1576-residue protein sequence, read N- to C-terminus: MDSSPDLSLKLRRGSSDSRDNFYMDFAQGIDSDIEEVDNTANNQEAGEVPPPPLPTVSLAEEVLLLVAPPPPPPSLLGQPLPTLTETDDIPPTPTPPPQQKDDEGDDEDEREEPVPEQDQGAPAAPSPPGSPINSVLELELIPPPPLSPMDDAGLRTDDDGEGEETDDAEEVAAIPPPHEMLDIESNPDEEEEEEEQEQASQEDTPKEEDEEEDDDKSTPPPPLPPLPSNFSYVQGHNLGQVTPPLTKSPSNSPSPPVTPPPCPELNISRMVSPPAQHISQIPPLTPSDESEGEAESQPNSPPLRLDAEQPPPDMDQPEPEDQPPEPENEPEPEPEPEPEPEPVSGAREDYSRSLDNEDESTTITTPPSNGYSASSIIAPPPEHFAELDEDRGFIPPPPLEQEPEEEVEEEEEEEEEELTKETDEISVDRESLQDQGGDSISSPRPASILTGSISTSVGGGAGGSPKPESRGPSRSGSQRSQLRSGSQQGSIAESRGGSRIGSRTGSVASAQAAGVLSPQASLKSQTSIRSQGQAGVRSPAGSIKSGSQRMQSPQAGEGAPAMPSPPLMRSPPPELARQMHSPPRITTPPRVCSPPLVSSPPKLAESAAAAVGVAATVKEQIGSSSSTAEPLEPSKPEPLKPPIATVSYQDEQKPSPPPTAAAAPAVTTTAATTAVTSQPRSHFTSSHHHYHLPHQFQHPHHQNHHTHSVRVPTPTVPSSYAPPPPPDSGSSSSPVDRRRLFMAGVAPPIAAGAGSLMAMPAEPAVAISPGRVSARSGSQHHVTIDESSLPSHKGNIQETPGPSGLIIGGGDGDGDRDIGGGGGPDSSDPPSSPGGSSSQPALSGSQADGQLALMYHSHQLTNYPVLPAIKRTHRPSFVYPPMPRVKAGDALATLFSALYGKLLVVMGIAFPMAEVISTYIPPSFYEVYYLYLYIGSMIFLLFMYATLIWGRPKLPVPIASPSKSATKASGTDSMDESDTDSNSVHHRLPPPIPVRRPSLLSPLGRRDAHYGSFYLRMGAVAFGIGSMIYSGLEFGQYFELNPDTKCHNVLLALTPATRMAFIFIQMYFIFLNNEQIKVYRYKIIARFGLMHMIGTNLAVWLNVLIQETKHEILTFYNPENRTLRISHRIPGHSRGHAIIQHDPTAHLRVPRGLKGPYQIFECRRTNIIGTLVQDASPFLFPCTIEYSLICAAILYVMWRSISRPQTPTPQRPDMISSPMKRSPHHYSVDCARAHKGLFVGILILVLTIISLIIFFVLISRPEFVAMAVTEVTICELLIYGTATIATLVGMIQIRHLQYDAYRSFSLDDILLVGAQTGSFLYNIFTVIAGHFTLRSDDMLVPINALASIVQTACQTMFILDASRRQAVSPEHLRKKPGREIVTFMLVVNLAMWAISTLEKSRAESHPIQLNFYGLWAWTIITHVSMPLAIFYRFHSTVCLCEIWKRAYKLKPTYMXEFARSRIQSIAQQQQFCEDLKTNLSYCYCSTTLAGGELETVEEVDSGESNSAEDAGAGAGSGGSRGSGGGAGAAEAGEAGEEGQQGGDSSCGLKAPIRALSPQSLNTEKAFCPVYVINGE.

Disordered stretches follow at residues 1-602 (MDSS…SSPP) and 621-736 (QIGS…SSPV). Low complexity-rich tracts occupy residues 58–67 (SLAEEVLLLV) and 76–85 (LLGQPLPTLT). Acidic residues-rich tracts occupy residues 103–116 (DEGD…EPVP), 159–171 (DDGE…DAEE), 186–198 (SNPD…EEQE), and 206–216 (PKEEDEEEDDD). Residues 219–228 (TPPPPLPPLP) show a composition bias toward pro residues. Polar residues predominate over residues 229–241 (SNFSYVQGHNLGQ). Asparagine 230 carries an N-linked (GlcNAc...) asparagine glycan. The segment covering 243-252 (TPPLTKSPSN) has biased composition (low complexity). The span at 253 to 264 (SPSPPVTPPPCP) shows a compositional bias: pro residues. A glycan (N-linked (GlcNAc...) asparagine) is linked at asparagine 267. The segment covering 316–341 (DQPEPEDQPPEPENEPEPEPEPEPEP) has biased composition (acidic residues). Positions 347–356 (AREDYSRSLD) are enriched in basic and acidic residues. Residues 362–376 (TTITTPPSNGYSASS) show a composition bias toward polar residues. Basic and acidic residues predominate over residues 384 to 393 (HFAELDEDRG). Positions 402–419 (QEPEEEVEEEEEEEEEEL) are enriched in acidic residues. Positions 420 to 433 (TKETDEISVDRESL) are enriched in basic and acidic residues. Residues 434–457 (QDQGGDSISSPRPASILTGSISTS) are compositionally biased toward polar residues. The segment covering 465 to 507 (SPKPESRGPSRSGSQRSQLRSGSQQGSIAESRGGSRIGSRTGS) has biased composition (low complexity). Polar residues-rich tracts occupy residues 519–534 (PQAS…SQGQ) and 545–555 (KSGSQRMQSPQ). Residues 563-575 (MPSPPLMRSPPPE) are compositionally biased toward pro residues. A compositionally biased stretch (low complexity) spans 661–685 (AAAAPAVTTTAATTAVTSQPRSHFT). Residues 686 to 709 (SSHHHYHLPHQFQHPHHQNHHTHS) show a composition bias toward basic residues. Residues 741-761 (LFMAGVAPPIAAGAGSLMAMP) form a helical membrane-spanning segment. Residues 771–845 (GRVSARSGSQ…GSSSQPALSG (75 aa)) form a disordered region. Residues 776–799 (RSGSQHHVTIDESSLPSHKGNIQE) show a composition bias toward polar residues. A compositionally biased stretch (low complexity) spans 826 to 839 (DSSDPPSSPGGSSS). Helical transmembrane passes span 891–911 (ALAT…GIAF) and 931–951 (LYLY…LIWG). Polar residues predominate over residues 962–973 (PSKSATKASGTD). Residues 962-1001 (PSKSATKASGTDSMDESDTDSNSVHHRLPPPIPVRRPSLL) are disordered. Helical transmembrane passes span 1019–1039 (GAVA…GQYF), 1051–1071 (LLAL…YFIF), and 1084–1104 (IIAR…WLNV). An N-linked (GlcNAc...) asparagine glycan is attached at asparagine 1121. Transmembrane regions (helical) follow at residues 1179–1199 (FLFP…YVMW), 1239–1259 (FVGI…FVLI), 1272–1292 (VTIC…VGMI), 1310–1330 (ILLV…VIAG), 1340–1360 (LVPI…MFIL), 1381–1401 (IVTF…LEKS), and 1412–1432 (FYGL…AIFY). Residue asparagine 1479 is glycosylated (N-linked (GlcNAc...) asparagine). The segment at 1498-1549 (EEVDSGESNSAEDAGAGAGSGGSRGSGGGAGAAEAGEAGEEGQQGGDSSCGL) is disordered. Positions 1503-1512 (GESNSAEDAG) are enriched in low complexity. A compositionally biased stretch (gly residues) spans 1513 to 1528 (AGAGSGGSRGSGGGAG).

It belongs to the otopetrin family.

It localises to the cell membrane. Functionally, proton-selective channel that specifically transports protons into cells. Proton-selective channel activity is probably required in cell types that use changes in intracellular pH for cell signaling or to regulate biochemical or developmental processes. The protein is Proton channel OtopLc of Drosophila melanogaster (Fruit fly).